The sequence spans 548 residues: Chaperonin GroEL (548 aa).

ATP-binding positions include 30 to 33 (TLGP), K51, 87 to 91 (DGTTT), G415, 479 to 481 (NAA), and D495.

This sequence belongs to the chaperonin (HSP60) family. Forms a cylinder of 14 subunits composed of two heptameric rings stacked back-to-back. Interacts with the co-chaperonin GroES.

It is found in the cytoplasm. It catalyses the reaction ATP + H2O + a folded polypeptide = ADP + phosphate + an unfolded polypeptide.. Its function is as follows. Together with its co-chaperonin GroES, plays an essential role in assisting protein folding. The GroEL-GroES system forms a nano-cage that allows encapsulation of the non-native substrate proteins and provides a physical environment optimized to promote and accelerate protein folding. The polypeptide is Chaperonin GroEL (Salmonella gallinarum (strain 287/91 / NCTC 13346)).